Here is a 72-residue protein sequence, read N- to C-terminus: UPF0352 protein CGSHiGG_07710 (72 aa).

This sequence belongs to the UPF0352 family.

This chain is UPF0352 protein CGSHiGG_07710, found in Haemophilus influenzae (strain PittGG).